The chain runs to 268 residues: Casein kinase II subunit beta (268 aa).

The tract at residues L222–K268 is disordered. Positions N224–K268 are enriched in low complexity.

Belongs to the casein kinase 2 subunit beta family. In terms of assembly, casein kinase II/CK2 is a tetramer composed of two alpha subunit and two beta subunits.

Functionally, regulatory subunit of casein kinase II/CK2. As part of the kinase complex regulates the basal catalytic activity of the alpha subunit a constitutively active serine/threonine-protein kinase that phosphorylates a large number of substrates containing acidic residues C-terminal to the phosphorylated serine or threonine. This chain is Casein kinase II subunit beta (csnk2b), found in Dictyostelium discoideum (Social amoeba).